A 1358-amino-acid polypeptide reads, in one-letter code: Probable serine/threonine-protein kinase ifkB (1358 aa).

One can recognise a Protein kinase domain in the interval Met-1–Leu-582. Residues Ile-2 to Val-10 and Lys-25 contribute to the ATP site. The segment at Gly-125–Glu-359 is disordered. The span at Val-136–Gly-148 shows a compositional bias: polar residues. Residues Asn-149–Asn-196 show a composition bias toward low complexity. The span at Lys-197–Lys-208 shows a compositional bias: basic residues. Low complexity predominate over residues Asn-258 to Gly-285. Residues Asp-306 to Asp-333 show a composition bias toward acidic residues. The segment covering Ser-342–Ser-351 has biased composition (low complexity). Asp-413 (proton acceptor) is an active-site residue. Disordered stretches follow at residues Asp-445–Gln-470 and Gly-1148–Ser-1204. Residues Leu-447 to Ser-466 show a composition bias toward low complexity. Over residues Gly-1148–Asn-1172 the composition is skewed to gly residues. Over residues Ser-1185 to Asn-1199 the composition is skewed to low complexity.

It belongs to the protein kinase superfamily. Ser/Thr protein kinase family. GCN2 subfamily.

It carries out the reaction L-seryl-[protein] + ATP = O-phospho-L-seryl-[protein] + ADP + H(+). The catalysed reaction is L-threonyl-[protein] + ATP = O-phospho-L-threonyl-[protein] + ADP + H(+). The protein is Probable serine/threonine-protein kinase ifkB (ifkB) of Dictyostelium discoideum (Social amoeba).